We begin with the raw amino-acid sequence, 152 residues long: Xanthine-guanine phosphoribosyltransferase (152 aa).

Residues 37-38 (RG), arginine 69, and 88-96 (DDLVDTGVT) contribute to the 5-phospho-alpha-D-ribose 1-diphosphate site. Arginine 69 provides a ligand contact to GMP. Aspartate 89 is a binding site for Mg(2+). Guanine contacts are provided by aspartate 92 and isoleucine 135. Xanthine-binding residues include aspartate 92 and isoleucine 135. GMP is bound by residues 92–96 (DTGVT) and 134–135 (WI).

It belongs to the purine/pyrimidine phosphoribosyltransferase family. XGPT subfamily. As to quaternary structure, homotetramer. Mg(2+) serves as cofactor.

It is found in the cell inner membrane. The catalysed reaction is GMP + diphosphate = guanine + 5-phospho-alpha-D-ribose 1-diphosphate. It catalyses the reaction XMP + diphosphate = xanthine + 5-phospho-alpha-D-ribose 1-diphosphate. The enzyme catalyses IMP + diphosphate = hypoxanthine + 5-phospho-alpha-D-ribose 1-diphosphate. Its pathway is purine metabolism; GMP biosynthesis via salvage pathway; GMP from guanine: step 1/1. It participates in purine metabolism; XMP biosynthesis via salvage pathway; XMP from xanthine: step 1/1. Functionally, purine salvage pathway enzyme that catalyzes the transfer of the ribosyl-5-phosphate group from 5-phospho-alpha-D-ribose 1-diphosphate (PRPP) to the N9 position of the 6-oxopurines guanine and xanthine to form the corresponding ribonucleotides GMP (guanosine 5'-monophosphate) and XMP (xanthosine 5'-monophosphate), with the release of PPi. To a lesser extent, also acts on hypoxanthine. The sequence is that of Xanthine-guanine phosphoribosyltransferase from Sodalis glossinidius (strain morsitans).